A 21-amino-acid chain; its full sequence is Pollen allergen Ole e 7 (21 aa).

This Olea europaea (Common olive) protein is Pollen allergen Ole e 7.